The primary structure comprises 96 residues: Co-chaperonin GroES (96 aa).

This sequence belongs to the GroES chaperonin family. Heptamer of 7 subunits arranged in a ring. Interacts with the chaperonin GroEL.

The protein localises to the cytoplasm. Together with the chaperonin GroEL, plays an essential role in assisting protein folding. The GroEL-GroES system forms a nano-cage that allows encapsulation of the non-native substrate proteins and provides a physical environment optimized to promote and accelerate protein folding. GroES binds to the apical surface of the GroEL ring, thereby capping the opening of the GroEL channel. In Legionella pneumophila (strain Paris), this protein is Co-chaperonin GroES.